The chain runs to 551 residues: Nucleobase-ascorbate transporter 3 (551 aa).

Positions 1 to 30 (MVETGHHHQHPPAPAAAGHPPVPSMAMARN) are disordered. A run of 12 helical transmembrane segments spans residues 56 to 76 (ETVV…VLIA), 92 to 111 (RVIQ…QTLI), 117 to 136 (TVMG…IRDY), 158 to 178 (SLII…WGNL), 179 to 199 (IRIF…LGLF), 202 to 222 (GFPL…LLII), 242 to 262 (ALLV…VSGA), 306 to 326 (VFGM…VFFA), 390 to 410 (FFMI…SIPL), 412 to 432 (IFAG…ISFI), 442 to 462 (NMYV…YFLA), and 481 to 501 (DILN…ATIL).

It belongs to the nucleobase:cation symporter-2 (NCS2) (TC 2.A.40) family. As to expression, expressed in the apical meristem 4 days after imbibition (DAI). Expressed in the major veins of rosette leaves and pedicels. Expressed in the root central cylinder, root meristems, root tips and lateral root primordia.

It is found in the membrane. This is Nucleobase-ascorbate transporter 3 (NAT3) from Arabidopsis thaliana (Mouse-ear cress).